A 216-amino-acid polypeptide reads, in one-letter code: Transmembrane protein 125 (216 aa).

A run of 4 helical transmembrane segments spans residues 32 to 52 (LLCF…GVAL), 65 to 85 (LAVG…QLMS), 111 to 131 (AVVV…LAGL), and 144 to 164 (MLSV…GLLL).

The protein localises to the membrane. The polypeptide is Transmembrane protein 125 (Tmem125) (Mus musculus (Mouse)).